The primary structure comprises 638 residues: Chaperone protein DnaK (638 aa).

T198 carries the phosphothreonine; by autocatalysis modification. The tract at residues 600–638 is disordered; sequence KTQTEGGAQPGAEADGDTGAKGGEKVVDADFEEVKDDKK. Acidic residues predominate over residues 628–638; the sequence is ADFEEVKDDKK.

This sequence belongs to the heat shock protein 70 family.

In terms of biological role, acts as a chaperone. This chain is Chaperone protein DnaK, found in Geobacter metallireducens (strain ATCC 53774 / DSM 7210 / GS-15).